A 489-amino-acid polypeptide reads, in one-letter code: Ribonuclease G (489 aa).

One can recognise an S1 motif domain in the interval 39-128; sequence GNIYKGRVSR…LTTDITLPSR (90 aa). Mg(2+) contacts are provided by Asp-304 and Asp-347.

The protein belongs to the RNase E/G family. RNase G subfamily. As to quaternary structure, homodimer, in equilibrium with possible higher multimers. The cofactor is Mg(2+).

The protein localises to the cytoplasm. An endonuclease that acts in the processing of the 5'-end of 16S rRNA and 23S rRNA. It prefers 5'-monophosphorylated substrates and cleaves single-stranded sites rich in A and U residues; contributes to tRNA processing and mRNA turnover. The polypeptide is Ribonuclease G (rng) (Escherichia coli O157:H7).